The chain runs to 283 residues: MKQYLELCNRIIDEGTWIENERTGKRCLTVINADLTYNVGNNEFPLITTRKSFWKSAIAEMLGYIRGYDNAADFRALGAKTWDANANENQVWLNNPHRKGVDDMGRVYGVQGRAWSKPDGGTVDQLKKIVDNLKAGVDDRGEILSFYNPGEFHMGCLRPCMHTHNFSLLGDTLYLNSFQRSCDVPLGLNFNQVQVYTLLALIAQITGKKPGMAYHKIVNAHIYEDQLALMRDVQLKREPFEPASLSINPDIKSLEDLETWVTMDDFEVSGYQHHEAIKYPFSV.

Arg-22 serves as a coordination point for dUMP. Cys-160 serves as the catalytic Nucleophile. Residues 180–183, Asn-191, and 221–223 contribute to the dUMP site; these read RSCD and HIY. Asp-183 serves as a coordination point for (6R)-5,10-methylene-5,6,7,8-tetrahydrofolate. Ser-282 contacts (6R)-5,10-methylene-5,6,7,8-tetrahydrofolate.

Belongs to the thymidylate synthase family. Bacterial-type ThyA subfamily. In terms of assembly, homodimer.

It localises to the cytoplasm. The catalysed reaction is dUMP + (6R)-5,10-methylene-5,6,7,8-tetrahydrofolate = 7,8-dihydrofolate + dTMP. Its pathway is pyrimidine metabolism; dTTP biosynthesis. Its function is as follows. Catalyzes the reductive methylation of 2'-deoxyuridine-5'-monophosphate (dUMP) to 2'-deoxythymidine-5'-monophosphate (dTMP) while utilizing 5,10-methylenetetrahydrofolate (mTHF) as the methyl donor and reductant in the reaction, yielding dihydrofolate (DHF) as a by-product. This enzymatic reaction provides an intracellular de novo source of dTMP, an essential precursor for DNA biosynthesis. The polypeptide is Thymidylate synthase (Shewanella sediminis (strain HAW-EB3)).